The sequence spans 332 residues: Opticin (332 aa).

Positions 1–19 (MRLLAFLSLLALVLQETGT) are cleaved as a signal peptide. The interval 21–41 (SLPRKERKRREEQMPREGDSF) is disordered. Basic and acidic residues predominate over residues 29–39 (RREEQMPREGD). A sulfotyrosine mark is found at Tyr65 and Tyr71. The interval 86-106 (ATSISPAKSTTAPGTPSSNPT) is disordered. In terms of domain architecture, LRRNT spans 116–153 (LLSSQPNHGLPTCLVCVCLGSSVYCDDIDLEDIPPLPR). Tyr139 is modified (sulfotyrosine). LRR repeat units follow at residues 154–175 (RTAYLYARFNRISRIRAEDFKG), 178–199 (KLKRIDLSNNLISSIDNDAFRL), 202–223 (ALQDLILPENQLEALPVLPSGI), 248–269 (KLQFLYLSDNLLDSIPGPLPLS), 270–290 (LRSVHLQNNLIETMQRDVFCD), and 300–320 (QLEDIRLDGNPINLSLFPSAY). An intrachain disulfide couples Cys289 to Cys322. Asn312 carries N-linked (GlcNAc...) asparagine glycosylation.

Belongs to the small leucine-rich proteoglycan (SLRP) family. SLRP class III subfamily. Homodimer. O-glycosylated. In terms of processing, proteolytically cleaved by MMP1, MMP2, MMP3, MMP7, MMP8, MMP9, ADAMTS4, and ADAMTS5. Proteolytically cleaved by MMP13. The degradation of OPTC by proteases may contribute to osteoarthritis pathophysiology. Post-translationally, sulfated on tyrosine residues. Expressed in cartilage and synovial membranes (at protein level). Expressed in the retina, iris, ligament, skin and fetal liver (at protein level). Expressed in the retinal pigment epithelium (at protein level). Expressed in synovial fibroblasts and subchondral bone osteoblasts.

The protein localises to the secreted. It is found in the extracellular space. The protein resides in the extracellular matrix. In terms of biological role, inhibits angiogenesis in the vitreous humor of the eye, and therefore represses neovascularization. Binds collagen fibrils. May be involved in collagen fiber organization via regulation of other members of the small leucine-rich repeat proteoglycan superfamily. The chain is Opticin (OPTC) from Homo sapiens (Human).